Here is a 68-residue protein sequence, read N- to C-terminus: Molybdenum-pterin-binding protein 2 (68 aa).

The 67-residue stretch at Ser2 to Ala68 folds into the Mop domain.

Binds one mole of molybdenum per mole of protein and contains a pterin. The sequence is that of Molybdenum-pterin-binding protein 2 (mopII) from Clostridium pasteurianum.